Consider the following 1645-residue polypeptide: Cortactin-binding protein 2 (1645 aa).

Disordered stretches follow at residues 1–28 (MATDGASCEPDFSRAPEDAEGATAEAAK), 269–293 (LKRGNDSKPSLSLPRKTKDRRSVSI), 366–435 (IVSS…AALH), 451–478 (GNANDPDQNGNTTQSPPSRDVSPTSRDS), and 492–612 (ALSR…PPKP). Positions 119–276 (RKMQERMSTQ…EQLKRGNDSK (158 aa)) form a coiled coil. 2 stretches are compositionally biased toward polar residues: residues 407 to 417 (QTPTIAPQSHA) and 451 to 477 (GNANDPDQNGNTTQSPPSRDVSPTSRD). Residue arginine 495 is modified to Asymmetric dimethylarginine. Residues 580-590 (TMASPPSTLPQ) show a composition bias toward polar residues. ANK repeat units lie at residues 706-736 (GRPTLLQQAAAQGNVTLLSMLLNEEGLDINY), 740-769 (DGHSALYSAAKNGHTDCVRLLLNAEAQVNA), 773-802 (NGFTPLCAAAAQGHFKCVELLIAYNANINH), 806-835 (EGQTPLYLACKNGNKECIKHLLEAGTDRSV), 839-868 (DGWTPVHAAVDAGNVDSLKLLMYHRAPARR), and 909-939 (EGWTAAHIAASKGFKDCLEILCKHRGLEPER). Residues 868–898 (RNSLHEEEPESGVFDLDQGEESPEGTSKPVI) form a disordered region. The interval 1442-1479 (CSRKKGESGAWRKVSTSPRKKSGRFSPPSWSKPGPSEE) is disordered. Position 1521 is a phosphoserine (serine 1521). The disordered stretch occupies residues 1551 to 1645 (DDLRSFDSPG…EINNNSKEEI (95 aa)). Composition is skewed to polar residues over residues 1558-1569 (SPGNSPAFSATV) and 1582-1597 (PFSSHQPTECSNSQSK). The segment covering 1620-1634 (SQNTKRSSSSSNTRQ) has biased composition (low complexity). Polar residues predominate over residues 1635–1645 (IEINNNSKEEI).

Interacts with CTTN/cortactin SH3 domain. Interacts with STRN, STRN4/zinedin and MOB4/phocein; this interactions mediate the association with the STRIPAK core complex and may regulate dendritic spine distribution of the STRIPAK complex in hippocampal neurons. Activation of glutamate receptors weakens the interaction with STRN and STRN4.

The protein localises to the cytoplasm. The protein resides in the cell cortex. It is found in the cell projection. It localises to the dendritic spine. In terms of biological role, regulates the dendritic spine distribution of CTTN/cortactin in hippocampal neurons, and thus controls dendritic spinogenesis and dendritic spine maintenance. Associates with the striatin-interacting phosphatase and kinase (STRIPAK) core complex to regulate dendritic spine distribution of the STRIPAK complex in hippocampal neurons. The sequence is that of Cortactin-binding protein 2 (CTTNBP2) from Mustela putorius furo (European domestic ferret).